Reading from the N-terminus, the 281-residue chain is Probable feruloyl esterase A (281 aa).

The N-terminal stretch at 1-21 is a signal peptide; sequence MKNFFSMHAILLACSAGAGLA. Cystine bridges form between Cys-50/Cys-279, Cys-112/Cys-115, and Cys-248/Cys-255. Asp-98 lines the substrate pocket. N-linked (GlcNAc...) asparagine glycosylation is present at Asn-100. Residue Tyr-101 participates in substrate binding. The Nucleophile role is filled by Ser-154. A glycan (N-linked (GlcNAc...) asparagine) is linked at Asn-173. Asp-215 functions as the Charge relay system in the catalytic mechanism. Residue His-268 participates in substrate binding. His-268 (charge relay system) is an active-site residue.

The protein belongs to the AB hydrolase superfamily. FaeA family.

It is found in the secreted. It catalyses the reaction feruloyl-polysaccharide + H2O = ferulate + polysaccharide.. Its function is as follows. Involved in degradation of plant cell walls. Hydrolyzes the feruloyl-arabinose ester bond in arabinoxylans, and the feruloyl-galactose ester bond in pectin. The polypeptide is Probable feruloyl esterase A (faeA) (Aspergillus oryzae (strain ATCC 42149 / RIB 40) (Yellow koji mold)).